The chain runs to 278 residues: Adenosylcobinamide-GDP ribazoletransferase (278 aa).

The next 6 membrane-spanning stretches (helical) occupy residues 44 to 64 (GIGVVVGGAAAAMFALLQLLL), 69 to 89 (FTPLVAAAFSTVATVWLTGGF), 121 to 141 (AFGAMALVLALLCKVALLALL), 161 to 181 (VCAALWTGHIVSRGLPLVMIW), 204 to 224 (GGLAIAFSWCFGALALASLAL), and 227 to 247 (INLIVACGFSVLALLGLLRFF).

It belongs to the CobS family. It depends on Mg(2+) as a cofactor.

The protein localises to the cell inner membrane. It carries out the reaction alpha-ribazole + adenosylcob(III)inamide-GDP = adenosylcob(III)alamin + GMP + H(+). The enzyme catalyses alpha-ribazole 5'-phosphate + adenosylcob(III)inamide-GDP = adenosylcob(III)alamin 5'-phosphate + GMP + H(+). It functions in the pathway cofactor biosynthesis; adenosylcobalamin biosynthesis; adenosylcobalamin from cob(II)yrinate a,c-diamide: step 7/7. Its function is as follows. Joins adenosylcobinamide-GDP and alpha-ribazole to generate adenosylcobalamin (Ado-cobalamin). Also synthesizes adenosylcobalamin 5'-phosphate from adenosylcobinamide-GDP and alpha-ribazole 5'-phosphate. This is Adenosylcobinamide-GDP ribazoletransferase from Polaromonas naphthalenivorans (strain CJ2).